The following is a 500-amino-acid chain: Aspartyl/glutamyl-tRNA(Asn/Gln) amidotransferase subunit B (500 aa).

Belongs to the GatB/GatE family. GatB subfamily. In terms of assembly, heterotrimer of A, B and C subunits.

It catalyses the reaction L-glutamyl-tRNA(Gln) + L-glutamine + ATP + H2O = L-glutaminyl-tRNA(Gln) + L-glutamate + ADP + phosphate + H(+). It carries out the reaction L-aspartyl-tRNA(Asn) + L-glutamine + ATP + H2O = L-asparaginyl-tRNA(Asn) + L-glutamate + ADP + phosphate + 2 H(+). In terms of biological role, allows the formation of correctly charged Asn-tRNA(Asn) or Gln-tRNA(Gln) through the transamidation of misacylated Asp-tRNA(Asn) or Glu-tRNA(Gln) in organisms which lack either or both of asparaginyl-tRNA or glutaminyl-tRNA synthetases. The reaction takes place in the presence of glutamine and ATP through an activated phospho-Asp-tRNA(Asn) or phospho-Glu-tRNA(Gln). The protein is Aspartyl/glutamyl-tRNA(Asn/Gln) amidotransferase subunit B of Thermosynechococcus vestitus (strain NIES-2133 / IAM M-273 / BP-1).